A 141-amino-acid chain; its full sequence is Large ribosomal subunit protein uL11 (141 aa).

This sequence belongs to the universal ribosomal protein uL11 family. In terms of assembly, part of the ribosomal stalk of the 50S ribosomal subunit. Interacts with L10 and the large rRNA to form the base of the stalk. L10 forms an elongated spine to which L12 dimers bind in a sequential fashion forming a multimeric L10(L12)X complex. In terms of processing, one or more lysine residues are methylated.

Forms part of the ribosomal stalk which helps the ribosome interact with GTP-bound translation factors. The chain is Large ribosomal subunit protein uL11 from Prochlorococcus marinus subsp. pastoris (strain CCMP1986 / NIES-2087 / MED4).